The chain runs to 94 residues: Pyrimidine/purine nucleoside phosphorylase (94 aa).

The protein belongs to the nucleoside phosphorylase PpnP family.

The enzyme catalyses a purine D-ribonucleoside + phosphate = a purine nucleobase + alpha-D-ribose 1-phosphate. It carries out the reaction adenosine + phosphate = alpha-D-ribose 1-phosphate + adenine. The catalysed reaction is cytidine + phosphate = cytosine + alpha-D-ribose 1-phosphate. It catalyses the reaction guanosine + phosphate = alpha-D-ribose 1-phosphate + guanine. The enzyme catalyses inosine + phosphate = alpha-D-ribose 1-phosphate + hypoxanthine. It carries out the reaction thymidine + phosphate = 2-deoxy-alpha-D-ribose 1-phosphate + thymine. The catalysed reaction is uridine + phosphate = alpha-D-ribose 1-phosphate + uracil. It catalyses the reaction xanthosine + phosphate = alpha-D-ribose 1-phosphate + xanthine. In terms of biological role, catalyzes the phosphorolysis of diverse nucleosides, yielding D-ribose 1-phosphate and the respective free bases. Can use uridine, adenosine, guanosine, cytidine, thymidine, inosine and xanthosine as substrates. Also catalyzes the reverse reactions. This chain is Pyrimidine/purine nucleoside phosphorylase, found in Psychromonas ingrahamii (strain DSM 17664 / CCUG 51855 / 37).